A 143-amino-acid chain; its full sequence is Anti-sigma F factor (143 aa).

It belongs to the anti-sigma-factor family.

The catalysed reaction is L-seryl-[protein] + ATP = O-phospho-L-seryl-[protein] + ADP + H(+). The enzyme catalyses L-threonyl-[protein] + ATP = O-phospho-L-threonyl-[protein] + ADP + H(+). Its function is as follows. Binds to sigma F and blocks its ability to form an RNA polymerase holoenzyme (E-sigma F). Phosphorylates SpoIIAA on a serine residue. This phosphorylation may enable SpoIIAA to act as an anti-anti-sigma factor that counteracts SpoIIAB and thus releases sigma F from inhibition. The protein is Anti-sigma F factor of Thermoanaerobacter pseudethanolicus (strain ATCC 33223 / 39E) (Clostridium thermohydrosulfuricum).